Here is a 553-residue protein sequence, read N- to C-terminus: Dihydroxy-acid dehydratase (553 aa).

Residue Asp78 participates in Mg(2+) binding. Position 119 (Cys119) interacts with [2Fe-2S] cluster. Asp120 and Lys121 together coordinate Mg(2+). An N6-carboxylysine modification is found at Lys121. Residue Cys193 coordinates [2Fe-2S] cluster. Residue Glu441 coordinates Mg(2+). Ser467 (proton acceptor) is an active-site residue.

The protein belongs to the IlvD/Edd family. As to quaternary structure, homodimer. [2Fe-2S] cluster serves as cofactor. Mg(2+) is required as a cofactor.

It carries out the reaction (2R)-2,3-dihydroxy-3-methylbutanoate = 3-methyl-2-oxobutanoate + H2O. The catalysed reaction is (2R,3R)-2,3-dihydroxy-3-methylpentanoate = (S)-3-methyl-2-oxopentanoate + H2O. The protein operates within amino-acid biosynthesis; L-isoleucine biosynthesis; L-isoleucine from 2-oxobutanoate: step 3/4. It participates in amino-acid biosynthesis; L-valine biosynthesis; L-valine from pyruvate: step 3/4. In terms of biological role, functions in the biosynthesis of branched-chain amino acids. Catalyzes the dehydration of (2R,3R)-2,3-dihydroxy-3-methylpentanoate (2,3-dihydroxy-3-methylvalerate) into 2-oxo-3-methylpentanoate (2-oxo-3-methylvalerate) and of (2R)-2,3-dihydroxy-3-methylbutanoate (2,3-dihydroxyisovalerate) into 2-oxo-3-methylbutanoate (2-oxoisovalerate), the penultimate precursor to L-isoleucine and L-valine, respectively. The protein is Dihydroxy-acid dehydratase of Citrifermentans bemidjiense (strain ATCC BAA-1014 / DSM 16622 / JCM 12645 / Bem) (Geobacter bemidjiensis).